The chain runs to 325 residues: UDP-N-acetylglucosamine transporter ROCK1 (325 aa).

The Cytoplasmic segment spans residues 1–13; it reads MATANGAKSPSSM. The helical transmembrane segment at 14–34 threads the bilayer; sequence GPKVLFYSILLTLQYGAQPLI. The Lumenal portion of the chain corresponds to 35-42; that stretch reads SKRCIRKD. A helical membrane pass occupies residues 43 to 63; sequence VIVTSSVLTCEIVKVICALIL. Residues 64 to 109 are Cytoplasmic-facing; that stretch reads MARNGSLKGLAKEWTLMGSLTASGLPAAIYALQNSLLQISYRSLDS. A helical transmembrane segment spans residues 110–130; the sequence is LTFSILNQTKIFFTAFFTFII. The Lumenal portion of the chain corresponds to 131 to 135; it reads LRQKQ. A helical membrane pass occupies residues 136–156; it reads SILQIGALCLLIMAAVLLSVG. Residues 157–171 are Cytoplasmic-facing; sequence EGSNKDSSGINADQK. Residues 172–192 traverse the membrane as a helical segment; it reads LFYGIIPVLAASVLSGLASSL. Over 193–203 the chain is Lumenal; the sequence is CQWASQVKKHS. Residues 204–224 traverse the membrane as a helical segment; that stretch reads SYLMTVEMSIVGSLCLLVSTL. The Cytoplasmic segment spans residues 225 to 241; sequence KSPDGEAIKKYGFFHGW. Residues 242–262 traverse the membrane as a helical segment; that stretch reads TALTLVPVISNALGGILVGLV. The Lumenal segment spans residues 263–270; that stretch reads TSHAGGVR. The chain crosses the membrane as a helical span at residues 271–291; that stretch reads KGFVIVSALLVTALLQFAFEG. The Cytoplasmic portion of the chain corresponds to 292–325; it reads KPPSSYCLVALPLVMSSISMYQKYPYIDKKKKKV.

This sequence belongs to the nucleotide-sugar transporter family. CMP-Sialate:CMP antiporter (TC 2.A.7.12) subfamily. In terms of tissue distribution, expressed in roots, cotyledons, leaves, stems, flowers and siliques.

The protein localises to the endoplasmic reticulum membrane. Its function is as follows. Mediates the transport of UDP-linked acetylated hexosamines across the endoplasmic reticulum (ER) membrane. Facilitates UDP-N-acetylglucosamine (UDP-GlcNAc) and UDP-N-acetylgalactosamine (UDP-GalNAc) transport. Regulates the cytokinin signal in meristematic cells through modulating activity of cytokinin oxidases/dehydrogenases. Part of the ER quality control system, which determines the fate of aberrant proteins in the secretory pathway. The protein is UDP-N-acetylglucosamine transporter ROCK1 of Arabidopsis thaliana (Mouse-ear cress).